Reading from the N-terminus, the 98-residue chain is Large ribosomal subunit protein uL23 (98 aa).

It belongs to the universal ribosomal protein uL23 family. Part of the 50S ribosomal subunit. Contacts protein L29, and trigger factor when it is bound to the ribosome.

Its function is as follows. One of the early assembly proteins it binds 23S rRNA. One of the proteins that surrounds the polypeptide exit tunnel on the outside of the ribosome. Forms the main docking site for trigger factor binding to the ribosome. This Alcanivorax borkumensis (strain ATCC 700651 / DSM 11573 / NCIMB 13689 / SK2) protein is Large ribosomal subunit protein uL23.